The sequence spans 92 residues: Large ribosomal subunit protein uL24 (92 aa).

It belongs to the universal ribosomal protein uL24 family. In terms of assembly, part of the 50S ribosomal subunit.

Its function is as follows. One of two assembly initiator proteins, it binds directly to the 5'-end of the 23S rRNA, where it nucleates assembly of the 50S subunit. One of the proteins that surrounds the polypeptide exit tunnel on the outside of the subunit. The chain is Large ribosomal subunit protein uL24 from Opitutus terrae (strain DSM 11246 / JCM 15787 / PB90-1).